We begin with the raw amino-acid sequence, 169 residues long: Endoribonuclease YbeY (169 aa).

3 residues coordinate Zn(2+): histidine 126, histidine 130, and histidine 136.

Belongs to the endoribonuclease YbeY family. Requires Zn(2+) as cofactor.

It localises to the cytoplasm. In terms of biological role, single strand-specific metallo-endoribonuclease involved in late-stage 70S ribosome quality control and in maturation of the 3' terminus of the 16S rRNA. This chain is Endoribonuclease YbeY, found in Bradyrhizobium sp. (strain BTAi1 / ATCC BAA-1182).